Here is a 213-residue protein sequence, read N- to C-terminus: uncharacterized protein (213 aa).

The N-terminal stretch at 1 to 19 (MKKVLLLLFVLTIGLALSA) is a signal peptide. The N-palmitoyl cysteine moiety is linked to residue C20. C20 carries the S-diacylglycerol cysteine lipid modification. The disordered stretch occupies residues 20–62 (CSQSSDASEKEKPKEKKSQEELEKELDKELKKGGEPKTKKDDQ). The span at 26-62 (ASEKEKPKEKKSQEELEKELDKELKKGGEPKTKKDDQ) shows a compositional bias: basic and acidic residues.

It is found in the cell membrane. This is an uncharacterized protein from Bacillus subtilis (strain 168).